Reading from the N-terminus, the 340-residue chain is Guanine nucleotide-binding protein subunit beta-1 (340 aa).

WD repeat units follow at residues 53–83, 95–125, 141–170, 182–212, 224–254, 268–298, and 310–340; these read GHLA…IVWD, LRSS…SIYS, GHTG…ALWD, GHTG…KLWD, GHES…RLFD, NIIC…NVWD, and GHDN…KIWN.

The protein belongs to the WD repeat G protein beta family. As to quaternary structure, g proteins are composed of 3 units, alpha, beta and gamma. Interacts with G protein gamma subunits gpc-1 and gpc-2 and with egl-10 and eat-16. Interacts with goa-1 (in GDP-bound form).

Guanine nucleotide-binding proteins (G proteins) are involved as a modulator or transducer in various transmembrane signaling systems. The beta and gamma chains are required for the GTPase activity, for replacement of GDP by GTP, and for G protein-effector interaction. In the early embryo, controls the magnitude of the forces acting on centrosomes but is not required for generating asymmetric forces. The protein is Guanine nucleotide-binding protein subunit beta-1 (gpb-1) of Caenorhabditis briggsae.